We begin with the raw amino-acid sequence, 340 residues long: Methionine import ATP-binding protein MetN 2 (340 aa).

Residues 2–241 (ITLQNVVKEY…PQEKVTQRFV (240 aa)) form the ABC transporter domain. 38-45 (GYSGAGKS) is a binding site for ATP.

Belongs to the ABC transporter superfamily. Methionine importer (TC 3.A.1.24) family. The complex is composed of two ATP-binding proteins (MetN), two transmembrane proteins (MetI) and a solute-binding protein (MetQ).

It localises to the cell membrane. The catalysed reaction is L-methionine(out) + ATP + H2O = L-methionine(in) + ADP + phosphate + H(+). It carries out the reaction D-methionine(out) + ATP + H2O = D-methionine(in) + ADP + phosphate + H(+). Functionally, part of the ABC transporter complex MetNIQ involved in methionine import. Responsible for energy coupling to the transport system. In Listeria monocytogenes serotype 4b (strain F2365), this protein is Methionine import ATP-binding protein MetN 2.